A 547-amino-acid polypeptide reads, in one-letter code: Chaperonin GroEL (547 aa).

ATP-binding positions include 30–33 (TLGP), K51, 87–91 (DGTTT), G415, 479–481 (NAA), and D495.

It belongs to the chaperonin (HSP60) family. As to quaternary structure, forms a cylinder of 14 subunits composed of two heptameric rings stacked back-to-back. Interacts with the co-chaperonin GroES.

It localises to the cytoplasm. The enzyme catalyses ATP + H2O + a folded polypeptide = ADP + phosphate + an unfolded polypeptide.. In terms of biological role, together with its co-chaperonin GroES, plays an essential role in assisting protein folding. The GroEL-GroES system forms a nano-cage that allows encapsulation of the non-native substrate proteins and provides a physical environment optimized to promote and accelerate protein folding. In Pseudomonas syringae pv. syringae (strain B728a), this protein is Chaperonin GroEL.